The chain runs to 143 residues: Sporulation-specific cell division protein SsgB (143 aa).

The protein belongs to the SsgA family. As to quaternary structure, interacts with SsgA. Interacts with FtsZ (via N-terminus).

The protein localises to the cell septum. Its function is as follows. Involved in sporulation-specific cell division. Required for early stages of sporulation. Important in the process of growth cessation prior to sporulation-specific cell division. Recruits cell division protein FtsZ to the future septum sites and tethers the contractile ring structure (Z ring) to the cytoplasmic membrane during sporulation. Stimulates polymerization and filament length of FtsZ in vitro. This is Sporulation-specific cell division protein SsgB from Salinispora tropica (strain ATCC BAA-916 / DSM 44818 / JCM 13857 / NBRC 105044 / CNB-440).